Consider the following 404-residue polypeptide: Cytochrome b561 and DOMON domain-containing protein At2g04850 (404 aa).

Residues 1 to 22 (MATLILSFLLLLLATKLPESLA) form the signal peptide. The region spanning 43-173 (QQASIAWTYH…TKIHHVWNRG (131 aa)) is the DOMON domain. One can recognise a Cytochrome b561 domain in the interval 180–380 (SPTIHPTTST…MEVNSWVVFC (201 aa)). A helical membrane pass occupies residues 217–237 (VTHGVVNAISWGFLLPAGAVT). The heme b site is built by His-219 and His-255. Residues 256–276 (AAIQLTGFLLGTIGFSIGIVL) traverse the membrane as a helical segment. His-288 lines the heme b pocket. The helical transmembrane segment at 290 to 310 (SLGIATFTAAALQTLALLFRP) threads the bilayer. His-324 contacts heme b. Helical transmembrane passes span 326-346 (FVGY…FEVL) and 359-379 (LCLS…WVVF).

Requires heme b as cofactor.

Its subcellular location is the membrane. In terms of biological role, may act as a catecholamine-responsive trans-membrane electron transporter. The polypeptide is Cytochrome b561 and DOMON domain-containing protein At2g04850 (Arabidopsis thaliana (Mouse-ear cress)).